The following is a 240-amino-acid chain: DUP240 protein DFP1 (240 aa).

The interval 1 to 29 (MQPYLKKNTHATDDPKASPLKEGSPDNPE) is disordered. Transmembrane regions (helical) follow at residues 61–81 (IMIN…DIWF) and 84–104 (VLSP…VLQI).

The protein belongs to the DUP/COS family.

It is found in the membrane. In Saccharomyces cerevisiae (Baker's yeast), this protein is DUP240 protein DFP1.